We begin with the raw amino-acid sequence, 276 residues long: Large ribosomal subunit protein uL2 (276 aa).

Disordered regions lie at residues 1–20 (MGIKKYNPTTNGRRNMTTND) and 219–276 (TVRG…RRKK). Polar residues predominate over residues 7-20 (NPTTNGRRNMTTND).

The protein belongs to the universal ribosomal protein uL2 family. Part of the 50S ribosomal subunit. Forms a bridge to the 30S subunit in the 70S ribosome.

In terms of biological role, one of the primary rRNA binding proteins. Required for association of the 30S and 50S subunits to form the 70S ribosome, for tRNA binding and peptide bond formation. It has been suggested to have peptidyltransferase activity; this is somewhat controversial. Makes several contacts with the 16S rRNA in the 70S ribosome. The sequence is that of Large ribosomal subunit protein uL2 from Bacillus cereus (strain Q1).